A 161-amino-acid chain; its full sequence is DNA endonuclease I-CvuI (161 aa).

The protein belongs to the LAGLIDADG endonuclease family.

The protein resides in the plastid. It is found in the chloroplast. Functionally, probable endonuclease involved in intron homing. The protein is DNA endonuclease I-CvuI of Chlorella vulgaris (Green alga).